We begin with the raw amino-acid sequence, 1196 residues long: Phosphoglucan, water dikinase, chloroplastic (1196 aa).

The transit peptide at Met-1–Ala-54 directs the protein to the chloroplast. Thr-55 carries the N-acetylthreonine modification. The CBM20 domain occupies Lys-66–Ala-166. The interval Pro-174–Val-200 is disordered. The span at Asp-185–Val-200 shows a compositional bias: basic and acidic residues. The Tele-phosphohistidine intermediate role is filled by His-759. A disordered region spans residues Leu-804 to Tyr-855.

The protein belongs to the PEP-utilizing enzyme family. Homodimer. Requires Mg(2+) as cofactor. As to expression, in all starch containing tissues (e.g. roots, leaves, stems, inflorescence and siliques).

It localises to the plastid. The protein resides in the chloroplast. The enzyme catalyses [(1-&gt;4)-6-phospho-alpha-D-glucosyl](n) + n ATP + n H2O = [(1-&gt;4)-3,6-bisphospho-alpha-D-glucosyl](n) + n AMP + n phosphate + 2n H(+). In terms of biological role, mediates the incorporation of phosphate into starch-like phospho-alpha-glucan, mostly at the C-3 position of glucose units. Required for starch degradation, suggesting that the phosphate content of starch regulates its degradability. The sequence is that of Phosphoglucan, water dikinase, chloroplastic (GWD3) from Arabidopsis thaliana (Mouse-ear cress).